The chain runs to 339 residues: DNA-directed RNA polymerase subunit alpha (339 aa).

The segment at 1–233 (MVREEITGST…DLFLPFIHTE (233 aa)) is alpha N-terminal domain (alpha-NTD). The interval 266–339 (GIPLNCIFID…IDLPKNKFSL (74 aa)) is alpha C-terminal domain (alpha-CTD).

It belongs to the RNA polymerase alpha chain family. In terms of assembly, in plastids the minimal PEP RNA polymerase catalytic core is composed of four subunits: alpha, beta, beta', and beta''. When a (nuclear-encoded) sigma factor is associated with the core the holoenzyme is formed, which can initiate transcription.

The protein resides in the plastid. It localises to the chloroplast. The enzyme catalyses RNA(n) + a ribonucleoside 5'-triphosphate = RNA(n+1) + diphosphate. Functionally, DNA-dependent RNA polymerase catalyzes the transcription of DNA into RNA using the four ribonucleoside triphosphates as substrates. This Sorghum bicolor (Sorghum) protein is DNA-directed RNA polymerase subunit alpha.